Reading from the N-terminus, the 475-residue chain is Nitrogenase vanadium-iron protein beta chain (475 aa).

4 residues coordinate [8Fe-7S] cluster: Cys-31, Cys-56, Cys-115, and Ser-153.

This sequence belongs to the NifD/NifK/NifE/NifN family. In terms of assembly, hexamer of two alpha, two beta, and two delta chains. [8Fe-7S] cluster serves as cofactor.

It carries out the reaction N2 + 8 reduced [2Fe-2S]-[ferredoxin] + 16 ATP + 16 H2O = H2 + 8 oxidized [2Fe-2S]-[ferredoxin] + 2 NH4(+) + 16 ADP + 16 phosphate + 6 H(+). In terms of biological role, this vanadium-iron protein is part of the nitrogenase complex that catalyzes the key enzymatic reactions in nitrogen fixation. The polypeptide is Nitrogenase vanadium-iron protein beta chain (vnfK) (Azotobacter vinelandii).